The following is a 449-amino-acid chain: Protein translocase subunit SecD (449 aa).

Helical transmembrane passes span 6 to 26 (GLVFLAILAAMILAFTIVLPT), 272 to 292 (LAVKAGLVGIILVMIFMIAFY), 294 to 314 (LPGLLASIALVFYGVIVLALF), 317 to 337 (VPVTLTLAGIGGFIVSAGMAV), 379 to 399 (TFIACGILFWVGGTIAAGAPV), and 401 to 421 (GFAVTLFLGVAVSMFTAIFVT).

This sequence belongs to the SecD/SecF family. SecD subfamily. In terms of assembly, forms a complex with SecF. Part of the essential Sec protein translocation apparatus which comprises SecA, SecYEG and auxiliary proteins SecDF. Other proteins may also be involved.

It is found in the cell membrane. Its function is as follows. Part of the Sec protein translocase complex. Interacts with the SecYEG preprotein conducting channel. SecDF uses the proton motive force (PMF) to complete protein translocation after the ATP-dependent function of SecA. The protein is Protein translocase subunit SecD of Dehalococcoides mccartyi (strain VS).